Consider the following 92-residue polypeptide: Small ribosomal subunit protein uS19 (92 aa).

The protein belongs to the universal ribosomal protein uS19 family.

Protein S19 forms a complex with S13 that binds strongly to the 16S ribosomal RNA. This chain is Small ribosomal subunit protein uS19, found in Legionella pneumophila (strain Paris).